Consider the following 448-residue polypeptide: Serine/threonine-protein phosphatase 2A regulatory subunit B'' subunit gamma (448 aa).

EF-hand domains follow at residues Pro268–Cys303 and Lys336–Gln371. Positions 281, 283, 285, 287, and 292 each coordinate Ca(2+).

It is found in the nucleus. It localises to the cytoplasm. Functionally, possible role in the regulation of cell death. This is Serine/threonine-protein phosphatase 2A regulatory subunit B'' subunit gamma (ppp2r3c) from Xenopus tropicalis (Western clawed frog).